We begin with the raw amino-acid sequence, 161 residues long: Ribosome maturation factor RimP (161 aa).

Belongs to the RimP family.

It localises to the cytoplasm. Its function is as follows. Required for maturation of 30S ribosomal subunits. The protein is Ribosome maturation factor RimP of Myxococcus xanthus (strain DK1622).